Here is a 93-residue protein sequence, read N- to C-terminus: Large ribosomal subunit protein uL23cz/uL23cy (93 aa).

The protein belongs to the universal ribosomal protein uL23 family. In terms of assembly, part of the 50S ribosomal subunit.

The protein resides in the plastid. The protein localises to the chloroplast. Functionally, binds to 23S rRNA. This is Large ribosomal subunit protein uL23cz/uL23cy (rpl23-A) from Cucumis sativus (Cucumber).